Here is a 124-residue protein sequence, read N- to C-terminus: MIKGVGVDIIEINRVKNAIDRNYKFIEKLFSRREIAYIKAEKTKAQYIAGRFSAKEAVSKALGTGFRGFSFKNIEIHKDDLGKPIVVLNGGARAIAEGYGKYQVQLSISHDREKAIAYAVLEVF.

Mg(2+) is bound by residues Asp-8 and Glu-56.

This sequence belongs to the P-Pant transferase superfamily. AcpS family. Mg(2+) serves as cofactor.

The protein localises to the cytoplasm. The catalysed reaction is apo-[ACP] + CoA = holo-[ACP] + adenosine 3',5'-bisphosphate + H(+). Its function is as follows. Transfers the 4'-phosphopantetheine moiety from coenzyme A to a Ser of acyl-carrier-protein. The protein is Holo-[acyl-carrier-protein] synthase of Clostridium acetobutylicum (strain ATCC 824 / DSM 792 / JCM 1419 / IAM 19013 / LMG 5710 / NBRC 13948 / NRRL B-527 / VKM B-1787 / 2291 / W).